We begin with the raw amino-acid sequence, 2465 residues long: Protein DOP1A (2465 aa).

Disordered stretches follow at residues 559-600, 625-646, and 705-733; these read PSGQ…SSES, GAAA…TVGS, and TEHQ…KEKN. Low complexity predominate over residues 633–646; sequence STSSETETASTVGS. A compositionally biased stretch (basic and acidic residues) spans 707-733; sequence HQGDLGREQGETSKWDRNSQGDVKEKN. Serine 1266 is subject to Phosphoserine. Composition is skewed to basic and acidic residues over residues 1282–1291 and 1305–1315; these read EKETIVKESG and KKDDDKKKSSN. The interval 1282 to 1315 is disordered; it reads EKETIVKESGKQPGAKPKVKLARKKDDDKKKSSN.

It belongs to the DOP1 family.

Its subcellular location is the golgi apparatus membrane. In terms of biological role, may be involved in protein traffic between late Golgi and early endosomes. In Homo sapiens (Human), this protein is Protein DOP1A.